A 919-amino-acid chain; its full sequence is Kinesin-like protein KIN-UA (919 aa).

The interval 1-68 is disordered; that stretch reads MSTTSGTGGV…SGGGGDAGVP (68 aa). Over residues 15 to 51 the composition is skewed to low complexity; sequence GTQRSSLRTQSSASTSSGGQKASVKSKSVLRKSSPAA. A compositionally biased stretch (gly residues) spans 52–66; the sequence is LGGGSSKSGGGGDAG. Residues 70–412 form the Kinesin motor domain; sequence RVRVAVRLRP…IMFGQRAMKV (343 aa). 155-162 provides a ligand contact to ATP; that stretch reads GQTGTGKT. A disordered region spans residues 286–305; it reads TRDGLSSESNGNSHMTKSLK. Positions 291 to 301 are enriched in polar residues; it reads SSESNGNSHMT. Residues 382 to 390 carry the D-BOX motif; the sequence is RTSLVITIG. Coiled coils occupy residues 428-492 and 530-621; these read SRRL…SIKK and ALEE…LEQH. 4 ARM repeats span residues 650–689, 691–731, 733–773, and 775–814; these read KPPV…NLAA, EANQ…NLAM, ETNQ…NLCG, and DKLQ…NFAK.

It belongs to the TRAFAC class myosin-kinesin ATPase superfamily. Kinesin family. Ungrouped subfamily. Interacts (via C-terminus) with NEK5. Expressed in leaves, guard cells, trichomes, vascular tissues, stele of the root tip region and columella cells. Highest expression detected in guard cells.

The protein localises to the cytoplasm. The protein resides in the cytoskeleton. This is Kinesin-like protein KIN-UA from Arabidopsis thaliana (Mouse-ear cress).